Reading from the N-terminus, the 120-residue chain is Immunogenic miracidial antigen 5D (120 aa).

The segment at 41 to 120 is disordered; that stretch reads HIDVGDEDYH…PKKYGSGYKH (80 aa). The span at 45–66 shows a compositional bias: acidic residues; sequence GDEDYHDGDDDVDYTDDVDDVD.

It belongs to the immunogenic miracidial antigen family.

The sequence is that of Immunogenic miracidial antigen 5D (5D) from Schistosoma japonicum (Blood fluke).